A 453-amino-acid polypeptide reads, in one-letter code: SH2 domain-containing protein 4A (453 aa).

The stretch at 96-127 (EIIAEQARREAEKEAEQLRKKQEVELSQLSTL) forms a coiled coil. Residues 280 to 301 (AVKRPPIPPKPKLPPSANNSSI) form a disordered region. The segment covering 284 to 293 (PPIPPKPKLP) has biased composition (pro residues). Positions 347 to 439 (WFHGIISRQE…LGRELLRFPC (93 aa)) constitute an SH2 domain.

It is found in the cytoplasm. Its function is as follows. Inhibits estrogen-induced cell proliferation. The protein is SH2 domain-containing protein 4A (sh2d4a) of Xenopus tropicalis (Western clawed frog).